A 513-amino-acid polypeptide reads, in one-letter code: ATP synthase subunit alpha (513 aa).

Residue 169-176 (GDRQTGKT) coordinates ATP.

The protein belongs to the ATPase alpha/beta chains family. In terms of assembly, F-type ATPases have 2 components, CF(1) - the catalytic core - and CF(0) - the membrane proton channel. CF(1) has five subunits: alpha(3), beta(3), gamma(1), delta(1), epsilon(1). CF(0) has three main subunits: a(1), b(2) and c(9-12). The alpha and beta chains form an alternating ring which encloses part of the gamma chain. CF(1) is attached to CF(0) by a central stalk formed by the gamma and epsilon chains, while a peripheral stalk is formed by the delta and b chains.

Its subcellular location is the cell inner membrane. It carries out the reaction ATP + H2O + 4 H(+)(in) = ADP + phosphate + 5 H(+)(out). Functionally, produces ATP from ADP in the presence of a proton gradient across the membrane. The alpha chain is a regulatory subunit. The sequence is that of ATP synthase subunit alpha from Bordetella bronchiseptica (strain ATCC BAA-588 / NCTC 13252 / RB50) (Alcaligenes bronchisepticus).